The chain runs to 202 residues: Outer-membrane lipoprotein LolB (202 aa).

Residues 1 to 18 form the signal peptide; sequence MFRRTYFWLMLLPLFMVG. A lipid anchor (N-palmitoyl cysteine) is attached at C19. Residue C19 is the site of S-diacylglycerol cysteine attachment.

Belongs to the LolB family. In terms of assembly, monomer.

The protein resides in the cell outer membrane. Its function is as follows. Plays a critical role in the incorporation of lipoproteins in the outer membrane after they are released by the LolA protein. This chain is Outer-membrane lipoprotein LolB, found in Vibrio vulnificus (strain YJ016).